Reading from the N-terminus, the 190-residue chain is MRGLRPALSTFIFLLLITGGVYPLLTTVLGQWWFPWQANGSLIREGDTVRGSALIGQNFTGNGYFHGRPSATAEMPYNPQASGGSNLAVSNPELDKLIAARVAALRAANPDASASIPVELVTASASGLDNNITPQAAAWQIPRIAKARNLSVEQLTQLIAKYSQQPLVKYIGQPVVNIVKLNLALDKLDE.

The helical transmembrane segment at 10 to 30 (TFIFLLLITGGVYPLLTTVLG) threads the bilayer.

Belongs to the KdpC family. As to quaternary structure, the system is composed of three essential subunits: KdpA, KdpB and KdpC.

It localises to the cell inner membrane. Functionally, part of the high-affinity ATP-driven potassium transport (or Kdp) system, which catalyzes the hydrolysis of ATP coupled with the electrogenic transport of potassium into the cytoplasm. This subunit acts as a catalytic chaperone that increases the ATP-binding affinity of the ATP-hydrolyzing subunit KdpB by the formation of a transient KdpB/KdpC/ATP ternary complex. The protein is Potassium-transporting ATPase KdpC subunit of Escherichia coli (strain 55989 / EAEC).